Reading from the N-terminus, the 848-residue chain is Adenylate cyclase (848 aa).

Residues 1 to 535 form a catalytic region; that stretch reads MYLYIETLKQ…DVSHHFPLRL (535 aa). The segment at 541-848 is regulatory; it reads KALYSPCEIR…DAPLLQQYFS (308 aa). A Phosphohistidine; by CRR modification is found at His-609.

The protein belongs to the adenylyl cyclase class-1 family.

The protein localises to the cytoplasm. The catalysed reaction is ATP = 3',5'-cyclic AMP + diphosphate. The polypeptide is Adenylate cyclase (cyaA) (Escherichia coli O6:H1 (strain CFT073 / ATCC 700928 / UPEC)).